We begin with the raw amino-acid sequence, 113 residues long: Prostate and testis expressed protein 2 (113 aa).

The N-terminal stretch at 1 to 26 (MLVLFLLGTVFLLCPYWGELHDPIKA) is a signal peptide. Residues 29-110 (IMCYECKKYH…CDHSNYCNLP (82 aa)) enclose the UPAR/Ly6 domain. Intrachain disulfides connect cysteine 31–cysteine 57, cysteine 34–cysteine 42, cysteine 49–cysteine 80, and cysteine 84–cysteine 101.

This sequence belongs to the PATE family. In terms of tissue distribution, isoform 1 and isoform 2 are expressed in prostate and testis. Isoform 2 is expressed in male and female brain at equivalent levels, in particular in cerebellum, cerebral cortex, corpus callosum, occipital, parrietal and temporal lobes, and pons, but not in amygdala, cerebral peduncle, hippocampus and thalamus.

Its subcellular location is the secreted. In Homo sapiens (Human), this protein is Prostate and testis expressed protein 2 (PATE2).